A 462-amino-acid polypeptide reads, in one-letter code: Arginine biosynthesis bifunctional protein ArgJ, mitochondrial (462 aa).

Thr-200, Lys-228, Thr-239, Glu-326, Asn-457, and Thr-462 together coordinate substrate. Residue Thr-239 is the Nucleophile of the active site.

The protein belongs to the ArgJ family. As to quaternary structure, heterodimer of an alpha and a beta chain. The alpha and beta chains are autoproteolytically processed from a single precursor protein within the mitochondrion.

It localises to the mitochondrion matrix. It catalyses the reaction N(2)-acetyl-L-ornithine + L-glutamate = N-acetyl-L-glutamate + L-ornithine. The catalysed reaction is L-glutamate + acetyl-CoA = N-acetyl-L-glutamate + CoA + H(+). It functions in the pathway amino-acid biosynthesis; L-arginine biosynthesis; L-ornithine and N-acetyl-L-glutamate from L-glutamate and N(2)-acetyl-L-ornithine (cyclic): step 1/1. It participates in amino-acid biosynthesis; L-arginine biosynthesis; N(2)-acetyl-L-ornithine from L-glutamate: step 1/4. Functionally, catalyzes two activities which are involved in the cyclic version of arginine biosynthesis: the synthesis of acetylglutamate from glutamate and acetyl-CoA, and of ornithine by transacetylation between acetylornithine and glutamate. The polypeptide is Arginine biosynthesis bifunctional protein ArgJ, mitochondrial (Pyrenophora tritici-repentis (strain Pt-1C-BFP) (Wheat tan spot fungus)).